We begin with the raw amino-acid sequence, 326 residues long: Protein phosphatase 1 regulatory subunit SDS22 homolog (326 aa).

A disordered region spans residues 1–22 (MSNDKSAEVVVLPRENDEESKE). 12 LRR repeats span residues 35–57 (DIDSPEIDLTHTRADHIPDLTGF), 58–80 (PKIEELRMRNNLLVSISPTISSL), 81–102 (VTLTSLDLYENQLTEISHLESL), 103–126 (VNLVSLDLSYNRIRQINGLDKLTK), 128–146 (ETLYLVSNKIEKIENLEAL), 147–170 (TQLKLLELGDNRIKKIENIGHLVN), 172–190 (DELFIGKNKIRQLEGVETL), 191–212 (QKLSVLSLPGNRIVKIENVEQL), 213–236 (NNLKELYLSDQGLQDIHGVEPLTN), 238–256 (LLLDVANNEIKTFSGVERL), 257–280 (ESLNDFWANDNKVESFSEIEQLSK), and 281–304 (LKGLQTVYLERNPFYFNDTNQYRR).

It belongs to the SDS22 family.

The protein resides in the nucleus. In terms of biological role, regulatory subunit of protein phosphatase 1. This Caenorhabditis elegans protein is Protein phosphatase 1 regulatory subunit SDS22 homolog (sds-22).